The chain runs to 762 residues: Hyperosmolality-gated Ca2+ permeable channel 2.2 (762 aa).

Transmembrane regions (helical) follow at residues 3-23 (VSALLTSAGINIAICVVLVSL), 90-110 (MVICSIRIFSIVAVVCLAFVL), 144-164 (LWVHCLSLYIISSAACALLYF), 354-374 (IATLVGAIAFMFVFLFPVTFV), 402-422 (VITGYLPSVILVLFFYTVPPL), 445-465 (KILYFTIWNVFFVNILSGSVI), 500-520 (GWAGLACEIMQPVGLIWNLIA), 557-577 (VIAPLILPFLLIYFFFAYLIY), 594-614 (QYWPVFHNTTIFSLILSQVIA), and 615-635 (LGFFGLKLSTVASGFTIPLIL).

It belongs to the CSC1 (TC 1.A.17) family.

The protein localises to the membrane. Functionally, acts as an osmosensitive calcium-permeable cation channel. The protein is Hyperosmolality-gated Ca2+ permeable channel 2.2 of Arabidopsis thaliana (Mouse-ear cress).